We begin with the raw amino-acid sequence, 335 residues long: Fructose-1,6-bisphosphatase class 1 (335 aa).

Residues E94, D113, L115, and D116 each contribute to the Mg(2+) site. Substrate-binding positions include 116–119, N208, and K274; that span reads DGSS. E280 is a binding site for Mg(2+).

The protein belongs to the FBPase class 1 family. In terms of assembly, homotetramer. Requires Mg(2+) as cofactor.

The protein localises to the cytoplasm. The catalysed reaction is beta-D-fructose 1,6-bisphosphate + H2O = beta-D-fructose 6-phosphate + phosphate. It participates in carbohydrate biosynthesis; gluconeogenesis. The polypeptide is Fructose-1,6-bisphosphatase class 1 (Polynucleobacter asymbioticus (strain DSM 18221 / CIP 109841 / QLW-P1DMWA-1) (Polynucleobacter necessarius subsp. asymbioticus)).